We begin with the raw amino-acid sequence, 142 residues long: Nucleoside diphosphate kinase (142 aa).

Residues lysine 11, phenylalanine 59, arginine 87, threonine 93, arginine 104, and asparagine 114 each coordinate ATP. The active-site Pros-phosphohistidine intermediate is histidine 117.

The protein belongs to the NDK family. In terms of assembly, homotetramer. It depends on Mg(2+) as a cofactor.

The protein resides in the cytoplasm. It catalyses the reaction a 2'-deoxyribonucleoside 5'-diphosphate + ATP = a 2'-deoxyribonucleoside 5'-triphosphate + ADP. The enzyme catalyses a ribonucleoside 5'-diphosphate + ATP = a ribonucleoside 5'-triphosphate + ADP. Functionally, major role in the synthesis of nucleoside triphosphates other than ATP. The ATP gamma phosphate is transferred to the NDP beta phosphate via a ping-pong mechanism, using a phosphorylated active-site intermediate. The polypeptide is Nucleoside diphosphate kinase (Photobacterium profundum (strain SS9)).